The primary structure comprises 287 residues: Putative ABC transporter ATP-binding protein MM_1038 (287 aa).

In terms of domain architecture, ABC transporter spans 5 to 238; sequence LENISVFYSR…ENVPLPPVAS (234 aa). 40-47 contacts ATP; sequence GEKGAGKS.

The protein belongs to the ABC transporter superfamily.

It localises to the cell membrane. Functionally, probably part of an ABC transporter complex. Responsible for energy coupling to the transport system. This Methanosarcina mazei (strain ATCC BAA-159 / DSM 3647 / Goe1 / Go1 / JCM 11833 / OCM 88) (Methanosarcina frisia) protein is Putative ABC transporter ATP-binding protein MM_1038.